A 523-amino-acid chain; its full sequence is 2-isopropylmalate synthase (523 aa).

A Pyruvate carboxyltransferase domain is found at 5 to 267 (VIIFDTTLRD…HTNINHHEIW (263 aa)). Positions 14, 202, 204, and 238 each coordinate Mn(2+). A regulatory domain region spans residues 392–523 (RLDYFSVQSG…QNKENNKETV (132 aa)).

This sequence belongs to the alpha-IPM synthase/homocitrate synthase family. LeuA type 1 subfamily. Homodimer. The cofactor is Mn(2+).

It is found in the cytoplasm. The enzyme catalyses 3-methyl-2-oxobutanoate + acetyl-CoA + H2O = (2S)-2-isopropylmalate + CoA + H(+). The protein operates within amino-acid biosynthesis; L-leucine biosynthesis; L-leucine from 3-methyl-2-oxobutanoate: step 1/4. Functionally, catalyzes the condensation of the acetyl group of acetyl-CoA with 3-methyl-2-oxobutanoate (2-ketoisovalerate) to form 3-carboxy-3-hydroxy-4-methylpentanoate (2-isopropylmalate). This chain is 2-isopropylmalate synthase, found in Salmonella typhi.